Reading from the N-terminus, the 182-residue chain is Glycerol-3-phosphate acyltransferase 1 (182 aa).

A run of 5 helical transmembrane segments spans residues 5–25, 54–74, 81–101, 117–137, and 157–177; these read MQFL…AYIV, GYFI…VAVA, PTFV…PVLF, IAFD…FYLI, and ILYS…VLIL.

It belongs to the PlsY family. As to quaternary structure, probably interacts with PlsX.

It localises to the cell membrane. The enzyme catalyses an acyl phosphate + sn-glycerol 3-phosphate = a 1-acyl-sn-glycero-3-phosphate + phosphate. It functions in the pathway lipid metabolism; phospholipid metabolism. Functionally, catalyzes the transfer of an acyl group from acyl-phosphate (acyl-PO(4)) to glycerol-3-phosphate (G3P) to form lysophosphatidic acid (LPA). This enzyme utilizes acyl-phosphate as fatty acyl donor, but not acyl-CoA or acyl-ACP. The polypeptide is Glycerol-3-phosphate acyltransferase 1 (Bacillus cereus (strain ATCC 14579 / DSM 31 / CCUG 7414 / JCM 2152 / NBRC 15305 / NCIMB 9373 / NCTC 2599 / NRRL B-3711)).